The chain runs to 244 residues: NAD(P)H-hydrate epimerase (244 aa).

One can recognise a YjeF N-terminal domain in the interval 35–240 (IREIDSLAME…SIGVPLELLR (206 aa)). (6S)-NADPHX is bound at residue 82–86 (NNGGD). The K(+) site is built by Asn83 and Asp150. Residues 154–160 (GTGAKPP), Tyr165, and Asp183 contribute to the (6S)-NADPHX site. Thr186 is a K(+) binding site.

It belongs to the NnrE/AIBP family. K(+) serves as cofactor.

It catalyses the reaction (6R)-NADHX = (6S)-NADHX. The enzyme catalyses (6R)-NADPHX = (6S)-NADPHX. Catalyzes the epimerization of the S- and R-forms of NAD(P)HX, a damaged form of NAD(P)H that is a result of enzymatic or heat-dependent hydration. This is a prerequisite for the S-specific NAD(P)H-hydrate dehydratase to allow the repair of both epimers of NAD(P)HX. This chain is NAD(P)H-hydrate epimerase, found in Rhodopirellula baltica (strain DSM 10527 / NCIMB 13988 / SH1).